The sequence spans 172 residues: Thioredoxin M-type, chloroplastic (172 aa).

The transit peptide at 1–60 (MALESLFKSIHTKTSLSSSIVFIFKGKACLLTSKSRIQESFAELNSFTSLVLLIENHVLL) directs the protein to the chloroplast. A Thioredoxin domain is found at 61 to 172 (HAREAVNEVQ…TLSEKVEKYI (112 aa)). Catalysis depends on nucleophile residues C97 and C100. A disulfide bridge connects residues C97 and C100.

The protein belongs to the thioredoxin family. Plant M-type subfamily. Forms a complex with heterodimeric ferredoxin-thioredoxin reductase (FTR) and ferredoxin.

It is found in the plastid. The protein resides in the chloroplast. Participates in various redox reactions through the reversible oxidation of the active center dithiol to a disulfide. The M form is known to activate NADP-malate dehydrogenase. In Pisum sativum (Garden pea), this protein is Thioredoxin M-type, chloroplastic.